The sequence spans 1079 residues: Alpha-mannosidase C (1079 aa).

An N-terminal signal peptide occupies residues 1–22 (MFYKTFGFLFIYLIILISGTLS). Residues histidine 44 and aspartate 46 each contribute to the Zn(2+) site. Residues asparagine 60 and asparagine 96 are each glycosylated (N-linked (GlcNAc...) asparagine). Aspartate 158 lines the Zn(2+) pocket. Aspartate 158 (nucleophile) is an active-site residue. 4 N-linked (GlcNAc...) asparagine glycosylation sites follow: asparagine 192, asparagine 222, asparagine 248, and asparagine 467. Position 475 (histidine 475) interacts with Zn(2+). Asparagine 516, asparagine 527, asparagine 589, asparagine 760, asparagine 769, asparagine 848, asparagine 872, asparagine 912, asparagine 1040, and asparagine 1057 each carry an N-linked (GlcNAc...) asparagine glycan.

Belongs to the glycosyl hydrolase 38 family. It depends on Zn(2+) as a cofactor.

The protein localises to the secreted. It carries out the reaction Hydrolysis of terminal, non-reducing alpha-D-mannose residues in alpha-D-mannosides.. This Dictyostelium discoideum (Social amoeba) protein is Alpha-mannosidase C (manC).